Consider the following 495-residue polypeptide: Potassium voltage-gated channel subfamily A member 1 (495 aa).

Positions 1 to 30 are disordered; the sequence is MTVMSGENADEASTAPGHPQDGSYPRQADH. A tetramerization domain region spans residues 1-128; the sequence is MTVMSGENAD…FYELGEEAME (128 aa). Residues 1–164 are Cytoplasmic-facing; sequence MTVMSGENAD…LLFEYPESSG (164 aa). The residue at position 23 (Ser-23) is a Phosphoserine. The chain crosses the membrane as a helical span at residues 165–186; it reads PARVIAIVSVMVILISIVIFCL. At 187 to 220 the chain is on the extracellular side; it reads ETLPELKDDKDFTGTIHRIDNTTVIYTSNIFTDP. N-linked (GlcNAc...) asparagine glycosylation occurs at Asn-207. Residues 221–242 traverse the membrane as a helical segment; that stretch reads FFIVETLCIIWFSFELVVRFFA. Cys-243 carries S-palmitoyl cysteine lipidation. At 243 to 253 the chain is on the cytoplasmic side; the sequence is CPSKTDFFKNI. Residues 254-274 traverse the membrane as a helical segment; that stretch reads MNFIDIVAIIPYFITLGTEIA. Topologically, residues 275–287 are extracellular; sequence EQEGNQKGEQATS. A helical; Voltage-sensor membrane pass occupies residues 288–308; that stretch reads LAILRVIRLVRVFRIFKLSRH. Residues 309–323 lie on the Cytoplasmic side of the membrane; the sequence is SKGLQILGQTLKASM. The S4-S5 linker stretch occupies residues 310–323; that stretch reads KGLQILGQTLKASM. Ser-322 bears the Phosphoserine; by PKA mark. A helical transmembrane segment spans residues 324–345; that stretch reads RELGLLIFFLFIGVILFSSAVY. Over 346-359 the chain is Extracellular; that stretch reads FAEAEEAESHFSSI. Residues 360 to 371 constitute an intramembrane region (helical); sequence PDAFWWAVVSMT. Residues 372 to 377 carry the Selectivity filter motif; sequence TVGYGD. The stretch at 372-379 is an intramembrane region; the sequence is TVGYGDMY. Residues 380–386 lie on the Extracellular side of the membrane; that stretch reads PVTIGGK. A helical transmembrane segment spans residues 387-415; the sequence is IVGSLCAIAGVLTIALPVPVIVSNFNYFY. Over 416 to 495 the chain is Cytoplasmic; the sequence is HRETEGEEQA…VNKSKLLTDV (80 aa). 2 positions are modified to phosphoserine: Ser-437 and Ser-439. The residue at position 446 (Ser-446) is a Phosphoserine; by PKA. The PDZ-binding signature appears at 493 to 495; that stretch reads TDV.

This sequence belongs to the potassium channel family. A (Shaker) (TC 1.A.1.2) subfamily. Kv1.1/KCNA1 sub-subfamily. Homotetramer and heterotetramer with other channel-forming alpha subunits, such as KCNA2, KCNA4, KCNA5, KCNA6 and KCNA7. Channel activity is regulated by interaction with the beta subunits KCNAB1 and KCNAB2. Identified in a complex with KCNA2 and KCNAB2. Interacts (via C-terminus) with the PDZ domains of DLG1, DLG2 and DLG4. Interacts with LGI1 within a complex containing LGI1, KCNA4 and KCNAB1. Interacts (via N-terminus) with STX1A; this promotes channel inactivation. Interacts (via N-terminus) with the heterodimer formed by GNB1 and GNG2; this promotes channel inactivation. Can interact simultaneously with STX1A and the heterodimer formed by GNB1 and GNG2. Interacts (via cytoplasmic N-terminal domain) with KCNRG; this inhibits channel activity. Interacts with ANK3; this inhibits channel activity. Interacts with ADAM11. In terms of processing, N-glycosylated. Palmitoylated on Cys-243; which may be required for membrane targeting. Post-translationally, phosphorylated on tyrosine residues. Phosphorylation increases in response to NRG1; this inhibits channel activity. Phosphorylation at Ser-446 regulates channel activity by down-regulating expression at the cell membrane. Detected in brain. Expressed in cerebellar cortex basket cell terminals, the area surround the Purkinje cell soma, and the pinceaux expansions encircling the axon initial segment (at protein level). Detected in the juxtaparanodal regions of the nodes of Ranvier in myelinated axons. Detected in the paranodal region in sciatic nerve. Detected on cell bodies in cerebellum, dorsal and ventral cochlear nucleus, pontine reticular nucleus, mesencephalic trigeminal nucleus, motor trigeminal nucleus and the pricipal sensory trigeminal nucleus. Detected in terminal fields of basket cells in the cerebellum corpus medullare. Detected in hippocampus CA3 pyramidal neurons and in the hilus and stratum moleculare of the dentate gyrus. Detected in the central nucleus and the external nucleus of the inferior colliculus. Detected in fiber tracts in the optic tract, external medullary lamina, stria terminalis, medulla, ventral pallidum and substantia nigra. Detected in neurons from dorsal root ganglion. Detected in neurons in the medial nucleus of the trapezoid body. Detected in midbrain dopamine neuron axon terminals. Detected in brain cortex. Detected in brainstem. Detected in juxtaparanodal regions of the nodes of Ranvier in the vagus nerve, but only at very low levels in the heart. Detected in the islet of Langerhans. Detected at the luminal membrane in distal convoluted tubules in the kidney (at protein level). Detected in hippocampus, thalamus, neocortex and ventral brain cortex, including the piriform and entorhinal cortex and the amygdala. Detected in midbrain dopamine neurons. Detected in heart atrium, ventricle, sinoatrial node and atrioventricular node.

The protein resides in the cell membrane. Its subcellular location is the cell projection. It is found in the axon. The protein localises to the membrane. It localises to the perikaryon. The protein resides in the dendrite. Its subcellular location is the cell junction. It is found in the synapse. The protein localises to the cytoplasmic vesicle. It localises to the endoplasmic reticulum. The protein resides in the presynaptic cell membrane. Its subcellular location is the presynapse. It catalyses the reaction K(+)(in) = K(+)(out). With respect to regulation, inhibited by 4-aminopyridine (4-AP), tetraethylammonium (TEA) and dendrotoxin (DTX), but not by charybdotoxin (CTX). In terms of biological role, voltage-gated potassium channel that mediates transmembrane potassium transport in excitable membranes, primarily in the brain and the central nervous system, but also in the kidney. Contributes to the regulation of the membrane potential and nerve signaling, and prevents neuronal hyperexcitability. Forms tetrameric potassium-selective channels through which potassium ions pass in accordance with their electrochemical gradient. The channel alternates between opened and closed conformations in response to the voltage difference across the membrane. Can form functional homotetrameric channels and heterotetrameric channels that contain variable proportions of KCNA1, KCNA2, KCNA4, KCNA5, KCNA6, KCNA7, and possibly other family members as well; channel properties depend on the type of alpha subunits that are part of the channel. Channel properties are modulated by cytoplasmic beta subunits that regulate the subcellular location of the alpha subunits and promote rapid inactivation of delayed rectifier potassium channels. In vivo, membranes probably contain a mixture of heteromeric potassium channel complexes, making it difficult to assign currents observed in intact tissues to any particular potassium channel family member. Homotetrameric KCNA1 forms a delayed-rectifier potassium channel that opens in response to membrane depolarization, followed by slow spontaneous channel closure. In contrast, a heterotetrameric channel formed by KCNA1 and KCNA4 shows rapid inactivation. Regulates neuronal excitability in hippocampus, especially in mossy fibers and medial perforant path axons, preventing neuronal hyperexcitability. May function as down-stream effector for G protein-coupled receptors and inhibit GABAergic inputs to basolateral amygdala neurons. May contribute to the regulation of neurotransmitter release, such as gamma-aminobutyric acid (GABA) release. Plays a role in regulating the generation of action potentials and preventing hyperexcitability in myelinated axons of the vagus nerve, and thereby contributes to the regulation of heart contraction. Required for normal neuromuscular responses. Regulates the frequency of neuronal action potential firing in response to mechanical stimuli, and plays a role in the perception of pain caused by mechanical stimuli, but does not play a role in the perception of pain due to heat stimuli. Required for normal responses to auditory stimuli and precise location of sound sources, but not for sound perception. The use of toxins that block specific channels suggest that it contributes to the regulation of the axonal release of the neurotransmitter dopamine. Required for normal postnatal brain development and normal proliferation of neuronal precursor cells in the brain. Plays a role in the reabsorption of Mg(2+) in the distal convoluted tubules in the kidney and in magnesium ion homeostasis, probably via its effect on the membrane potential. The chain is Potassium voltage-gated channel subfamily A member 1 from Mus musculus (Mouse).